A 327-amino-acid polypeptide reads, in one-letter code: Annexin A8 (327 aa).

Annexin repeat units follow at residues 21–92, 93–164, 177–249, and 253–324; these read FNPD…ALMY, PPYR…CLLQ, GLAL…TVVK, and NVHS…NLVG. Ca(2+)-binding residues include methionine 266, glycine 268, glycine 270, and aspartate 310.

Belongs to the annexin family.

In terms of biological role, this protein is an anticoagulant protein that acts as an indirect inhibitor of the thromboplastin-specific complex, which is involved in the blood coagulation cascade. The protein is Annexin A8 (Anxa8) of Rattus norvegicus (Rat).